The chain runs to 553 residues: Transcription factor GAMYB (553 aa).

The segment covering 1 to 17 (MYRVKSESDCDMIHQEQ) has biased composition (basic and acidic residues). Positions 1-45 (MYRVKSESDCDMIHQEQMDSPVADDGSSGGSPHRGGGPPLKKGPW) are disordered. Gly residues predominate over residues 27-38 (SSGGSPHRGGGP). 2 consecutive HTH myb-type domains span residues 37–89 (GPPL…ANHL) and 90–144 (RPNL…KRCQ). 2 consecutive DNA-binding regions (H-T-H motif) follow at residues 65–89 (WNAVQKNTGLFRCGKSCRLRWANHL) and 117–140 (WARMAAHLPGRTDNEIKNYWNTRI). The disordered stretch occupies residues 464-489 (PAQSTSMGSGEQVMGPKYEPGDTSPH).

In terms of assembly, interacts with MYBS1. In terms of tissue distribution, expressed in aleurone cells, inflorescence shoot apical region, stamen primordia, and tapetum cells of the anther. Expressed at low level in roots and vegetative shoots.

The protein resides in the nucleus. Transcriptional activator of gibberellin-dependent alpha-amylase expression in aleurone cells. Involved in pollen and floral organs development. May bind to the 5'-TAACAAA-3' box of alpha-amylase promoter. Required for anther development. Functions in parallel with UDT1 to regulate early anther development. Functions upstream of the transcription factor TDR and may positively regulate its transcription. Required for pollen development. Probably required for controlling tapetal cell size and promoting tapetal programmed cell death (PCD) during anther development. Required for exine and Ubisch body formation in anthers. Interacts with the DNA specific motifs of giberrellin-up-regulated genes of anthers and regulates their expression. Positively regulates the expression of the laurate hydroxylase CYP703A3, known to be essential for the development of pollen exine and anther epicuticular layer. Functions with MYBS1 to integrate diverse nutrient starvation and gibberellin (GA) signaling pathways during germination of grains. Sugar, nitrogen and phosphate starvation signals converge and interconnect with GA to promote the co-nuclear import of GAMYB and MYBS1, resulting in the expression of a large set of GA-inducible hydrolases, transporters and regulators that are essential for mobilization of nutrient reserves in the endosperm to support seedling growth. The polypeptide is Transcription factor GAMYB (Oryza sativa subsp. japonica (Rice)).